We begin with the raw amino-acid sequence, 148 residues long: NADPH-dependent 7-cyano-7-deazaguanine reductase (148 aa).

The Thioimide intermediate role is filled by Cys50. Asp57 (proton donor) is an active-site residue. Substrate-binding positions include 72–74 and 91–92; these read VES and HE.

It belongs to the GTP cyclohydrolase I family. QueF type 1 subfamily.

It is found in the cytoplasm. The enzyme catalyses 7-aminomethyl-7-carbaguanine + 2 NADP(+) = 7-cyano-7-deazaguanine + 2 NADPH + 3 H(+). It functions in the pathway tRNA modification; tRNA-queuosine biosynthesis. Functionally, catalyzes the NADPH-dependent reduction of 7-cyano-7-deazaguanine (preQ0) to 7-aminomethyl-7-deazaguanine (preQ1). The chain is NADPH-dependent 7-cyano-7-deazaguanine reductase from Helicobacter pylori (strain ATCC 700392 / 26695) (Campylobacter pylori).